The chain runs to 452 residues: Phosphoglucosamine mutase (452 aa).

Catalysis depends on Ser-105, which acts as the Phosphoserine intermediate. The Mg(2+) site is built by Ser-105, Asp-244, Asp-246, and Asp-248. Ser-105 is modified (phosphoserine).

This sequence belongs to the phosphohexose mutase family. Mg(2+) is required as a cofactor. Post-translationally, activated by phosphorylation.

The enzyme catalyses alpha-D-glucosamine 1-phosphate = D-glucosamine 6-phosphate. In terms of biological role, catalyzes the conversion of glucosamine-6-phosphate to glucosamine-1-phosphate. The polypeptide is Phosphoglucosamine mutase (Blochmanniella floridana).